The sequence spans 345 residues: Glycerol-3-phosphate dehydrogenase [NAD(P)+] (345 aa).

NADPH is bound by residues S11, W12, H32, R33, and K106. K106, G137, and S139 together coordinate sn-glycerol 3-phosphate. Residue A141 coordinates NADPH. Sn-glycerol 3-phosphate-binding residues include K192, D245, S255, R256, and N257. The active-site Proton acceptor is K192. An NADPH-binding site is contributed by R256. Positions 280 and 282 each coordinate NADPH.

Belongs to the NAD-dependent glycerol-3-phosphate dehydrogenase family.

The protein localises to the cytoplasm. The catalysed reaction is sn-glycerol 3-phosphate + NAD(+) = dihydroxyacetone phosphate + NADH + H(+). It carries out the reaction sn-glycerol 3-phosphate + NADP(+) = dihydroxyacetone phosphate + NADPH + H(+). Its pathway is membrane lipid metabolism; glycerophospholipid metabolism. Functionally, catalyzes the reduction of the glycolytic intermediate dihydroxyacetone phosphate (DHAP) to sn-glycerol 3-phosphate (G3P), the key precursor for phospholipid synthesis. The chain is Glycerol-3-phosphate dehydrogenase [NAD(P)+] from Bacillus pumilus (strain SAFR-032).